The primary structure comprises 412 residues: Putative potassium channel protein RPA4233 (412 aa).

Helical transmembrane passes span 35–55 (FIVF…VPAM), 65–85 (ALEL…IWIA), 164–184 (LMAC…AMHI), 202–222 (WWAI…ATGI), and 225–245 (MVAS…VGIV). A Selectivity filter motif is present at residues 210-215 (TIGYGD). 270–388 (LFSHLTAGDI…RKINQIVEGR (119 aa)) provides a ligand contact to a nucleoside 3',5'-cyclic phosphate.

The protein belongs to the potassium channel family.

Its subcellular location is the cell membrane. The chain is Putative potassium channel protein RPA4233 from Rhodopseudomonas palustris (strain ATCC BAA-98 / CGA009).